The following is a 364-amino-acid chain: MTSGPSQPFPSASGPDDGPSWPRILGRLTTGQNLPNGHAAWAMDQIMTGAATPAQISGFAVSMKMKRPTASEVRELADIMLTHARRVPTDEIGTDTVDIVGTGGDGANTVNLSTMASIVVAACGVPVVKHGNRAASSLSGGADTLEALGVRIDLGPDDVARSVREVGIGFAFAPQFHPSYKHASIVRREIGVPTVFNLLGPLTNPAGPRAGLIGCAWADLAEVMAGVFAARGSSVLVVHGDDGLDELTTTTTSTIWRVQGGTMERLTFDPAAFGFKRAEISELVGGDASENAAEARAVLGGAKGPVRDAVVLNAAGAMVAHAGLASDAQWLPAWEAGLARAVEAIDSGAAEQLLARWVRFGQQL.

Over residues Met-1–Pro-10 the composition is skewed to polar residues. Positions Met-1–Pro-22 are disordered. 5-phospho-alpha-D-ribose 1-diphosphate-binding positions include Gly-101, Gly-104–Asp-105, Thr-109, Asn-111–Thr-114, Lys-129–Ser-137, and Gly-141. Gly-101 contributes to the anthranilate binding site. Position 113 (Ser-113) interacts with Mg(2+). Residue Asn-132 participates in anthranilate binding. Arg-187 serves as a coordination point for anthranilate. Positions 245 and 246 each coordinate Mg(2+).

This sequence belongs to the anthranilate phosphoribosyltransferase family. Homodimer. Mg(2+) is required as a cofactor.

The catalysed reaction is N-(5-phospho-beta-D-ribosyl)anthranilate + diphosphate = 5-phospho-alpha-D-ribose 1-diphosphate + anthranilate. It functions in the pathway amino-acid biosynthesis; L-tryptophan biosynthesis; L-tryptophan from chorismate: step 2/5. Its function is as follows. Catalyzes the transfer of the phosphoribosyl group of 5-phosphorylribose-1-pyrophosphate (PRPP) to anthranilate to yield N-(5'-phosphoribosyl)-anthranilate (PRA). The chain is Anthranilate phosphoribosyltransferase from Mycolicibacterium smegmatis (strain ATCC 700084 / mc(2)155) (Mycobacterium smegmatis).